A 190-amino-acid chain; its full sequence is T-cell receptor gamma chain C region 5/10-13 (190 aa).

Residues aspartate 1–tyrosine 157 are c region. Residues threonine 158–phenylalanine 178 form a helical membrane-spanning segment. Residues arginine 179–serine 190 are Cytoplasmic-facing.

It is found in the membrane. This is T-cell receptor gamma chain C region 5/10-13 from Mus musculus (Mouse).